We begin with the raw amino-acid sequence, 96 residues long: Protein RnfH (96 aa).

This sequence belongs to the UPF0125 (RnfH) family.

In Salmonella agona (strain SL483), this protein is Protein RnfH.